Here is a 129-residue protein sequence, read N- to C-terminus: uncharacterized protein (129 aa).

A compositionally biased stretch (basic and acidic residues) spans 91–114 (ASEKVGEMKEAASEKASEMKEAVS). Residues 91 to 129 (ASEKVGEMKEAASEKASEMKEAVSEKATQAVDAVKEATK) are disordered.

The protein belongs to the LEA type 1 family.

This is an uncharacterized protein from Haemophilus influenzae (strain ATCC 51907 / DSM 11121 / KW20 / Rd).